Here is a 500-residue protein sequence, read N- to C-terminus: Beta-xylosidase (500 aa).

Residue Glu160 is the Proton donor of the active site. Residue Glu277 is the Nucleophile of the active site.

Belongs to the glycosyl hydrolase 39 family.

It catalyses the reaction Hydrolysis of (1-&gt;4)-beta-D-xylans, to remove successive D-xylose residues from the non-reducing termini.. This chain is Beta-xylosidase (xynB), found in Thermoanaerobacterium saccharolyticum (strain DSM 8691 / JW/SL-YS485).